We begin with the raw amino-acid sequence, 65 residues long: Putative beta-neurotoxin RjAa7 (65 aa).

Positions 1–64 constitute an LCN-type CS-alpha/beta domain; the sequence is KEGYPVGRDG…VWDSSTNKCG (64 aa). Cystine bridges form between cysteine 11/cysteine 63, cysteine 15/cysteine 37, cysteine 22/cysteine 44, and cysteine 26/cysteine 46.

It belongs to the long (4 C-C) scorpion toxin superfamily. Sodium channel inhibitor family. Beta subfamily. Expressed by the venom gland.

The protein localises to the secreted. Its function is as follows. Beta toxins bind voltage-independently at site-4 of sodium channels (Nav) and shift the voltage of activation toward more negative potentials thereby affecting sodium channel activation and promoting spontaneous and repetitive firing. The polypeptide is Putative beta-neurotoxin RjAa7 (Rhopalurus junceus (Caribbean blue scorpion)).